A 250-amino-acid chain; its full sequence is Putative inner dynein arm light chain, axonemal (250 aa).

Residues 168 to 250 adopt a coiled-coil conformation; sequence MRKALQAHEE…QLEGITAPKK (83 aa).

The protein belongs to the inner dynein arm light chain family.

Its subcellular location is the cell projection. The protein resides in the cilium. The protein localises to the dynein axonemal particle. In terms of biological role, may play a dynamic role in flagellar motility. This chain is Putative inner dynein arm light chain, axonemal, found in Drosophila melanogaster (Fruit fly).